Reading from the N-terminus, the 196-residue chain is Prefoldin subunit 3 (196 aa).

At alanine 2 the chain carries N-acetylalanine. Lysine 58 is modified (N6-acetyllysine).

It belongs to the prefoldin subunit alpha family. Heterohexamer of two PFD-alpha type and four PFD-beta type subunits. Binds to the C-terminal part of VHL.

The protein localises to the cytoplasm. Its subcellular location is the nucleus. Its function is as follows. Binds specifically to cytosolic chaperonin (c-CPN) and transfers target proteins to it. Binds to nascent polypeptide chain and promotes folding in an environment in which there are many competing pathways for nonnative proteins. The chain is Prefoldin subunit 3 (Vbp1) from Mus musculus (Mouse).